The sequence spans 606 residues: 4-hydroxy-3-methylbut-2-en-1-yl diphosphate synthase (flavodoxin) (606 aa).

Cys-513, Cys-516, Cys-547, and Glu-554 together coordinate [4Fe-4S] cluster.

The protein belongs to the IspG family. It depends on [4Fe-4S] cluster as a cofactor.

The catalysed reaction is (2E)-4-hydroxy-3-methylbut-2-enyl diphosphate + oxidized [flavodoxin] + H2O + 2 H(+) = 2-C-methyl-D-erythritol 2,4-cyclic diphosphate + reduced [flavodoxin]. It functions in the pathway isoprenoid biosynthesis; isopentenyl diphosphate biosynthesis via DXP pathway; isopentenyl diphosphate from 1-deoxy-D-xylulose 5-phosphate: step 5/6. Functionally, converts 2C-methyl-D-erythritol 2,4-cyclodiphosphate (ME-2,4cPP) into 1-hydroxy-2-methyl-2-(E)-butenyl 4-diphosphate. The chain is 4-hydroxy-3-methylbut-2-en-1-yl diphosphate synthase (flavodoxin) from Chlamydia felis (strain Fe/C-56) (Chlamydophila felis).